A 219-amino-acid polypeptide reads, in one-letter code: Cytidylate kinase (219 aa).

15 to 23 (GPAASGKGT) lines the ATP pocket.

It belongs to the cytidylate kinase family. Type 1 subfamily.

It is found in the cytoplasm. The enzyme catalyses CMP + ATP = CDP + ADP. The catalysed reaction is dCMP + ATP = dCDP + ADP. The protein is Cytidylate kinase of Brucella melitensis biotype 2 (strain ATCC 23457).